The following is a 1609-amino-acid chain: Chitin synthase 5 (1609 aa).

Disordered regions lie at residues 1 to 188, 248 to 280, and 294 to 320; these read MNPF…DRER, SGLGVTGPTNVPPGGLGRAPPLRRGKSLLGRDE, and VSLRRKQSKSGNKPSKEVPRDLGESKT. Residues 1–326 lie on the Cytoplasmic side of the membrane; that stretch reads MNPFESLPDA…ESKTSRIAPG (326 aa). Polar residues predominate over residues 34 to 44; sequence PGSTGRPQNPI. The span at 61 to 82 shows a compositional bias: low complexity; that stretch reads PQQQQQQQQQQQQQQQRSQQPF. A compositionally biased stretch (polar residues) spans 100-111; it reads AYLNSTSSQPTQ. Positions 134 to 146 are enriched in basic and acidic residues; that stretch reads DSVKSYGDDKRSI. Positions 147–163 are enriched in polar residues; it reads NDPNSSSTALTQVNSLD. The segment covering 253-267 has biased composition (low complexity); that stretch reads TGPTNVPPGGLGRAP. Over residues 307 to 320 the composition is skewed to basic and acidic residues; it reads PSKEVPRDLGESKT. Residues 327–347 form a helical membrane-spanning segment; the sequence is PVGGWMIYCYILTICCPGPFL. The Extracellular portion of the chain corresponds to 348–364; the sequence is RIFGIRTPEQQRAWREK. A helical transmembrane segment spans residues 365 to 385; that stretch reads MGLIGIITLIMAAVGFLTFGF. The Cytoplasmic portion of the chain corresponds to 386 to 624; that stretch reads TQTVCGQQPD…ASKVELYLSL (239 aa). The chain crosses the membrane as a helical span at residues 625-645; sequence VFIIGVVAIKFFMAVMFGWFI. The Extracellular segment spans residues 646–1176; the sequence is SWRLGNYANE…MRFVVFMELT (531 aa). Asn654 carries N-linked (GlcNAc...) asparagine glycosylation. The segment at 729-767 is disordered; that stretch reads GVASPLGGSPPGSPSVAGGRSSASLAPAHSRRSSFSGSP. The span at 742–752 shows a compositional bias: low complexity; that stretch reads PSVAGGRSSAS. N-linked (GlcNAc...) asparagine glycosylation is found at Asn1015 and Asn1144. Residues 1177-1197 form a helical membrane-spanning segment; it reads GTLVLPAAIAFTLYVVVQAFL. Over 1198-1202 the chain is Cytoplasmic; sequence PNVPT. The helical transmembrane segment at 1203–1223 threads the bilayer; sequence PTIPLILLALILGLPGILIVV. Residues 1224 to 1227 are Extracellular-facing; it reads TSRK. A helical transmembrane segment spans residues 1228-1248; the sequence is IAYVGWMLIYLLSLPIWNFVL. At 1249–1609 the chain is on the cytoplasmic side; that stretch reads PLYAYWHMDD…PPGAAPPSFD (361 aa). Disordered stretches follow at residues 1354 to 1381 and 1399 to 1609; these read PNAMSSSSASQFGPDVSEVSHSKSPSGA and TDAK…PSFD. Composition is skewed to polar residues over residues 1502-1514 and 1530-1552; these read NVSTEQRYPTVSE and GSASPTPAQQGFNAANSNQQTRP. Over residues 1568 to 1588 the composition is skewed to low complexity; sequence AQGVRQVQRGARRSQMPNSAA.

Belongs to the chitin synthase family. Class IV subfamily.

It is found in the cell membrane. It localises to the cytoplasmic vesicle membrane. The catalysed reaction is [(1-&gt;4)-N-acetyl-beta-D-glucosaminyl](n) + UDP-N-acetyl-alpha-D-glucosamine = [(1-&gt;4)-N-acetyl-beta-D-glucosaminyl](n+1) + UDP + H(+). In terms of biological role, polymerizes chitin, a structural polymer of the cell wall and septum, by transferring the sugar moiety of UDP-GlcNAc to the non-reducing end of the growing chitin polymer. The chain is Chitin synthase 5 from Mycosarcoma maydis (Corn smut fungus).